Here is a 193-residue protein sequence, read N- to C-terminus: MAFELPPLPYEKNALEPHISAETLEYHHDKHHNTYVVNLNNLIPGTEFEGKSLEEIVKSSSGGIFNNAAQVWNHTFYWNCLSPNGGGQPTGALADAINAAFGSFDKFKEEFTKTSVGTFGSGWGWLVKKADGSLALASTIGAGNPLTSGDTPLLTCDVWEHAYYIDYRNLRPKYVEAFWNLVNWDFVAKNFAA.

4 residues coordinate Fe cation: His27, His74, Asp157, and His161.

It belongs to the iron/manganese superoxide dismutase family. In terms of assembly, homodimer. It depends on Fe cation as a cofactor.

The catalysed reaction is 2 superoxide + 2 H(+) = H2O2 + O2. Functionally, destroys superoxide anion radicals which are normally produced within the cells and which are toxic to biological systems. Partially complements double sodA-sodB deletions in E.coli. The sequence is that of Superoxide dismutase [Fe] from Pseudomonas aeruginosa (strain ATCC 15692 / DSM 22644 / CIP 104116 / JCM 14847 / LMG 12228 / 1C / PRS 101 / PAO1).